The chain runs to 1406 residues: Protein crumbs homolog 1 (1406 aa).

The signal sequence occupies residues 1–25 (MALKNINYLLIFYLSFSLLIYIKNS). The Extracellular portion of the chain corresponds to 26–1347 (FCNKNNTRCL…DDLISDIFTT (1322 aa)). N30, N41, and N42 each carry an N-linked (GlcNAc...) asparagine glycan. 3 consecutive EGF-like domains span residues 30-68 (NNTR…KDCD), 70-108 (MKDP…TICE), and 110-146 (TIGS…RFCE). 20 disulfide bridges follow: C34–C45, C39–C54, C56–C67, C74–C85, C79–C96, C98–C107, C114–C125, C119–C134, C136–C145, C152–C163, C157–C172, C174–C183, C190–C201, C195–C210, C212–C221, C228–C239, C233–C248, C250–C259, C266–C277, and C271–C286. Residues 148-184 (DHDECASSPCQNGAVCQDGIDGYSCFCVPGYQGRHCD) enclose the EGF-like 4; calcium-binding domain. Positions 186-222 (EVDECASDPCKNEATCLNEIGRYTCICPHNYSGVNCE) constitute an EGF-like 5; calcium-binding domain. N215 carries N-linked (GlcNAc...) asparagine glycosylation. The EGF-like 6; calcium-binding domain maps to 224 to 260 (EIDECWSQPCLNGATCQDALGAYFCDCAPGFLGDHCE). In terms of domain architecture, EGF-like 7; calcium-binding spans 262–299 (NTDECASQPCLHGGLCVDGENRYSCNCTGSGFTGTHCE). Residue N287 is glycosylated (N-linked (GlcNAc...) asparagine). 13 cysteine pairs are disulfide-bonded: C288–C298, C305–C316, C310–C325, C327–C336, C343–C354, C348–C383, C385–C394, C401–C412, C406–C421, C423–C438, C445–C456, C450–C469, and C471–C480. EGF-like domains are found at residues 301–337 (LMPL…AQCE) and 339–395 (DLNE…IHCE). N313 and N322 each carry an N-linked (GlcNAc...) asparagine glycan. Positions 397-439 (DVNECSSNPCQNGGTCENLPGNYTCHCPFDNLSRTFYGGRDCS) constitute an EGF-like 10; calcium-binding domain. N-linked (GlcNAc...) asparagine glycans are attached at residues N418, N427, and N453. The 41-residue stretch at 441–481 (ILLGCTHQQCLNNGTCIPHFQDGQHGFSCLCPSGYTGSLCE) folds into the EGF-like 11 domain. Residues 485-670 (TLSFEGDGFL…GSSLNVKAGC (186 aa)) enclose the Laminin G-like 1 domain. N550, N561, and N657 each carry an N-linked (GlcNAc...) asparagine glycan. 4 cysteine pairs are disulfide-bonded: C642–C670, C676–C687, C681–C696, and C698–C707. Residues 672–708 (RKDWCESQPCQSRGRCINLWLSYQCDCHRPYEGPNCL) enclose the EGF-like 12 domain. Residues 714–885 (GRFGQDDSTG…PVLVNVTQGC (172 aa)) form the Laminin G-like 2 domain. N-linked (GlcNAc...) asparagine glycosylation is found at N757, N871, and N880. Intrachain disulfides connect C851-C885, C891-C902, C896-C911, C913-C922, C928-C939, and C933-C948. 2 consecutive EGF-like domains span residues 887-923 (GDNS…KACE) and 924-960 (EVQW…QSGQ). The region spanning 950–1137 (ANAVFNGQSG…ISTNSVVTGC (188 aa)) is the Laminin G-like 3 domain. Residues N968, N975, and N1000 are each glycosylated (N-linked (GlcNAc...) asparagine). 16 cysteine pairs are disulfide-bonded: C1096–C1137, C1143–C1154, C1148–C1163, C1165–C1174, C1181–C1191, C1186–C1200, C1202–C1211, C1218–C1229, C1223–C1238, C1240–C1249, C1259–C1274, C1268–C1283, C1285–C1294, C1301–C1312, C1306–C1321, and C1323–C1332. In terms of domain architecture, EGF-like 15 spans 1139-1175 (QLNVCNSNPCLHGGNCEDIYSSYHCSCPLGWSGKHCE). Residues 1177–1212 (NIDECFSNPCIHGNCSDRVAAYHCTCEPGYTGVNCE) enclose the EGF-like 16; calcium-binding domain. N1190 is a glycosylation site (N-linked (GlcNAc...) asparagine). EGF-like domains lie at 1214–1250 (DIDN…KFCR) and 1255–1295 (PSTV…EWCE). N-linked (GlcNAc...) asparagine glycans are attached at residues N1243, N1265, and N1273. Positions 1297–1333 (DIDECASDPCVNGGLCQDLLNKFQCLCDVAFAGERCE) constitute an EGF-like 19; calcium-binding domain. The helical transmembrane segment at 1348 to 1368 (IGSVTVALLLILLLAIVASVV) threads the bilayer. At 1369-1406 (TSNKRATQGTYSPSRQEKEGSRVEMWNLMPPPAMERLI) the chain is on the cytoplasmic side. The interaction with EPB41L5 stretch occupies residues 1370–1406 (SNKRATQGTYSPSRQEKEGSRVEMWNLMPPPAMERLI).

Belongs to the Crumbs protein family. In terms of assembly, component of a complex composed of PALS1, CRB1 and EPB41L5. Within the complex, interacts (via intracellular domain) with PALS1 and EPB41L5 (via FERM domain). Forms a complex with MPP4 and PALS1. Interacts with MPDZ/MUPP1 and MPP4. Extensively glycosylated. Preferential expression in retina, also expressed in brain, testis, fetal brain and fetal eye. Expressed at the outer limiting membrane and apical to adherens junctions in the retina.

It localises to the apical cell membrane. Its subcellular location is the secreted. It is found in the cell projection. The protein localises to the cilium. The protein resides in the photoreceptor outer segment. It localises to the photoreceptor inner segment. Its function is as follows. Plays a role in photoreceptor morphogenesis in the retina. May maintain cell polarization and adhesion. This chain is Protein crumbs homolog 1, found in Homo sapiens (Human).